Consider the following 291-residue polypeptide: tRNA dimethylallyltransferase (291 aa).

9-16 (GPTASGKT) lines the ATP pocket. A substrate-binding site is contributed by 11–16 (TASGKT). An interaction with substrate tRNA region spans residues 34-37 (DSLQ).

This sequence belongs to the IPP transferase family. In terms of assembly, monomer. Mg(2+) is required as a cofactor.

The enzyme catalyses adenosine(37) in tRNA + dimethylallyl diphosphate = N(6)-dimethylallyladenosine(37) in tRNA + diphosphate. Catalyzes the transfer of a dimethylallyl group onto the adenine at position 37 in tRNAs that read codons beginning with uridine, leading to the formation of N6-(dimethylallyl)adenosine (i(6)A). The chain is tRNA dimethylallyltransferase from Aster yellows witches'-broom phytoplasma (strain AYWB).